The sequence spans 345 residues: Annexin A9 (345 aa).

4 Annexin repeats span residues 41–112, 113–184, 197–266, and 270–341; these read FSAD…ALLQ, PAAH…ALAK, NLAA…NLAS, and NTPL…ALCR.

It belongs to the annexin family. In terms of assembly, homodimer.

In terms of biological role, may act as a low affinity receptor for acetylcholine. The sequence is that of Annexin A9 (ANXA9) from Bos taurus (Bovine).